Consider the following 213-residue polypeptide: Ribosomal RNA small subunit methyltransferase G (213 aa).

Residues glycine 72, phenylalanine 77, 125–126, and arginine 141 each bind S-adenosyl-L-methionine; that span reads IE.

It belongs to the methyltransferase superfamily. RNA methyltransferase RsmG family.

The protein localises to the cytoplasm. The enzyme catalyses guanosine(527) in 16S rRNA + S-adenosyl-L-methionine = N(7)-methylguanosine(527) in 16S rRNA + S-adenosyl-L-homocysteine. Functionally, specifically methylates the N7 position of guanine in position 527 of 16S rRNA. This is Ribosomal RNA small subunit methyltransferase G from Sinorhizobium medicae (strain WSM419) (Ensifer medicae).